We begin with the raw amino-acid sequence, 488 residues long: Glutamyl-tRNA(Gln) amidotransferase subunit A (488 aa).

Residues Lys-77 and Ser-152 each act as charge relay system in the active site. The Acyl-ester intermediate role is filled by Ser-176.

This sequence belongs to the amidase family. GatA subfamily. As to quaternary structure, heterotrimer of A, B and C subunits.

It carries out the reaction L-glutamyl-tRNA(Gln) + L-glutamine + ATP + H2O = L-glutaminyl-tRNA(Gln) + L-glutamate + ADP + phosphate + H(+). Allows the formation of correctly charged Gln-tRNA(Gln) through the transamidation of misacylated Glu-tRNA(Gln) in organisms which lack glutaminyl-tRNA synthetase. The reaction takes place in the presence of glutamine and ATP through an activated gamma-phospho-Glu-tRNA(Gln). The chain is Glutamyl-tRNA(Gln) amidotransferase subunit A from Streptococcus equi subsp. zooepidemicus (strain MGCS10565).